The primary structure comprises 798 residues: MLQNVTPHKLPGEGNAGLLGLGPEAAAPGKRIRKPSLLYEGFESPTMASVPALQLAPANPPPPEVSNPKKPGRVTNQLQYLHKVVMKALWKHQFAWPFRQPVDAVKLGLPDYHKIIKQPMDMGTIKRRLENNYYWAASECMQDFNTMFTNCYIYNKPTDDIVLMAQTLEKIFLQKVASMPQEEQELVVTIPKNSHKKGAKLAALQGSITSAHQVPAVSSVSHTALYTPPPEIPTTVLNIPHPSVISSPLLKSLHSAGPPLLAVSAAPPAQPLAKKKGVKRKADTTTPTPTAILAPGSPASPPGSLEPKAARLPPMRRESGRPIKPPRKDLPDSQQQHQSSKKGKLSEQLKHCNGILKELLSKKHAAYAWPFYKPVDASALGLHDYHDIIKHPMDLSTVKRKMENRDYRDAQEFAADVRLMFSNCYKYNPPDHDVVAMARKLQDVFEFRYAKMPDEPLEPGPLPVSTALPPGLAKSSSESSSEESSSESSSEEEEEEDEEDEEEESESSDSEEERAHRLAELQEQLRAVHEQLAALSQGPISKPKRKREKKEKKKKRKAEKHRGRIGIDEDDKGPRAPRPLQPKKSKKAGGGGSNATTLSHPGFGTSAGSSNKLPKKAQKTAPPVLPTGYDSEEEEESRPMSYDEKRQLSLDINKLPGEKLGRVVHIIQAREPSLRDSNPEEIEIDFETLKPSTLRELERYVLSCLRKKPRKPYTIRKPVGKTKEELALEKKRELEKRLQDVSGQLNSTKKPPKKASEKTESSAQQVAVSRLSASSSSSDSSSSSSSSSSSDTSDSDSG.

Residue Met1 is modified to N-acetylmethionine. Residues 1–21 (MLQNVTPHKLPGEGNAGLLGL) are disordered. Thr6 is modified (phosphothreonine). Ser36 is modified (phosphoserine). The disordered stretch occupies residues 53-72 (LQLAPANPPPPEVSNPKKPG). The Bromo 1 domain occupies 73–179 (RVTNQLQYLH…KIFLQKVASM (107 aa)). Positions 111, 154, 155, 156, 159, and 160 each coordinate a protein. Disordered regions lie at residues 267–348 (PPAQ…LSEQ), 455–648 (EPLE…KRQL), and 735–798 (EKRL…SDSG). Residues 284–297 (TTTPTPTAILAPGS) are compositionally biased toward low complexity. A phosphoserine mark is found at Ser297, Ser300, and Ser304. Over residues 315–331 (MRRESGRPIKPPRKDLP) the composition is skewed to basic and acidic residues. The region spanning 343-452 (GKLSEQLKHC…DVFEFRYAKM (110 aa)) is the Bromo 2 domain. The segment covering 480-512 (SSEESSSESSSEEEEEEDEEDEEEESESSDSEE) has biased composition (acidic residues). Over residues 542 to 564 (KPKRKREKKEKKKKRKAEKHRGR) the composition is skewed to basic residues. A Nuclear localization signal motif is present at residues 553 to 557 (KKKRK). In terms of domain architecture, NET spans 630–712 (DSEEEEESRP…SCLRKKPRKP (83 aa)). Ser631 carries the phosphoserine modification. The span at 637-648 (SRPMSYDEKRQL) shows a compositional bias: basic and acidic residues. Residues 772-792 (SASSSSSDSSSSSSSSSSSDT) are compositionally biased toward low complexity.

The protein belongs to the BET family. Homodimer. Interacts with E2F1. Interacts with (acetylated) STAT3; promoting STAT3 recruitment to chromatin. Interacts with CTCF; promoting BRD2 recruitment to chromatin.

The protein localises to the nucleus. Its subcellular location is the chromosome. Chromatin reader protein that specifically recognizes and binds histone H4 acetylated at 'Lys-5' and 'Lys-12' (H4K5ac and H4K12ac, respectively), thereby controlling gene expression and remodeling chromatin structures. Recruits transcription factors and coactivators to target gene sites, and activates RNA polymerase II machinery for transcriptional elongation. Plays a key role in genome compartmentalization via its association with CTCF and cohesin: recruited to chromatin by CTCF and promotes formation of topologically associating domains (TADs) via its ability to bind acetylated histones, contributing to CTCF boundary formation and enhancer insulation. Also recognizes and binds acetylated non-histone proteins, such as STAT3. Involved in inflammatory response by regulating differentiation of naive CD4(+) T-cells into T-helper Th17: recognizes and binds STAT3 acetylated at 'Lys-87', promoting STAT3 recruitment to chromatin. In addition to acetylated lysines, also recognizes and binds lysine residues on histones that are both methylated and acetylated on the same side chain to form N6-acetyl-N6-methyllysine (Kacme), an epigenetic mark of active chromatin associated with increased transcriptional initiation. Specifically binds histone H4 acetyl-methylated at 'Lys-5' and 'Lys-12' (H4K5acme and H4K12acme, respectively). In Rattus norvegicus (Rat), this protein is Bromodomain-containing protein 2 (Brd2).